The chain runs to 284 residues: N-acylphosphatidylethanolamine synthase (284 aa).

The helical transmembrane segment at 21 to 37 (TVIMAVSAFAKAVANLC) threads the bilayer. The short motif at 67 to 72 (HMSTLD) is the HXXXXD motif element. Positions 122-163 (GGGIYQENMNEALQRLKDGSWLHTFPEGKVFQDDVPIRRLKW) are hydrophilic.

The protein belongs to the taffazin family. As to expression, essentially present in young tissues. Expressed in roots, cotyledons, leaves, and shoot and root apical meristems.

The protein localises to the cell membrane. Functionally, acyltransferase that catalyzes the N-acylation of phosphatidylethanolamine to form N-acylphosphatidylethanolamine (N-acyl-PE) (e.g. NAPEs containing C16:0, C16:1, C18:0, and C18:1). Also mediates the formation of acylphosphatidylglycerol (acyl-PG) from lysoglycerophospholipid by O-acylation. Uses acyl-CoA as acyl donors. Acylates 1-acyllysophosphatidylethanolamine (1-acyllyso-PE) and 1-acyllysophosphatidylglycerol (1-acyllyso-PG) at the sn-2-position. The sequence is that of N-acylphosphatidylethanolamine synthase from Arabidopsis thaliana (Mouse-ear cress).